A 338-amino-acid polypeptide reads, in one-letter code: GTPase Obg (338 aa).

Positions 1-159 (MQFIDQAEIE…RRIRLELKLL (159 aa)) constitute an Obg domain. In terms of domain architecture, OBG-type G spans 160-328 (AEVGIIGLPN…MLQATWEQLD (169 aa)). GTP is bound by residues 166–173 (GLPNAGKS), 191–195 (FTTLI), 213–216 (DIPG), 280–283 (NKLD), and 309–311 (SAV). 2 residues coordinate Mg(2+): S173 and T193.

It belongs to the TRAFAC class OBG-HflX-like GTPase superfamily. OBG GTPase family. In terms of assembly, monomer. It depends on Mg(2+) as a cofactor.

It localises to the cytoplasm. In terms of biological role, an essential GTPase which binds GTP, GDP and possibly (p)ppGpp with moderate affinity, with high nucleotide exchange rates and a fairly low GTP hydrolysis rate. Plays a role in control of the cell cycle, stress response, ribosome biogenesis and in those bacteria that undergo differentiation, in morphogenesis control. The chain is GTPase Obg from Gloeothece citriformis (strain PCC 7424) (Cyanothece sp. (strain PCC 7424)).